Here is a 421-residue protein sequence, read N- to C-terminus: ATP-dependent RNA helicase RhlB (421 aa).

Residues Gln-9–Ala-37 carry the Q motif motif. The region spanning Leu-40–Ile-219 is the Helicase ATP-binding domain. Ala-53–Thr-60 lines the ATP pocket. The DEAD box signature appears at Asp-165–Asp-168. Residues Arg-245–Met-390 form the Helicase C-terminal domain. Residues Asp-392–Gly-421 are disordered. Residues Pro-402–Pro-414 show a composition bias toward low complexity.

The protein belongs to the DEAD box helicase family. RhlB subfamily. In terms of assembly, component of the RNA degradosome, which is a multiprotein complex involved in RNA processing and mRNA degradation.

It is found in the cytoplasm. The enzyme catalyses ATP + H2O = ADP + phosphate + H(+). Functionally, DEAD-box RNA helicase involved in RNA degradation. Has RNA-dependent ATPase activity and unwinds double-stranded RNA. This Escherichia coli O157:H7 protein is ATP-dependent RNA helicase RhlB.